The sequence spans 234 residues: Peroxiredoxin (234 aa).

The region spanning 6–161 is the Thioredoxin domain; the sequence is PLIGEKLPEM…ILRLLKALQV (156 aa). The active-site Cysteine sulfenic acid (-SOH) intermediate is C48. R124 contributes to the substrate binding site. C203 and C209 are joined by a disulfide.

It belongs to the peroxiredoxin family. Prx6 subfamily. As to quaternary structure, homodecamer. Pentamer of dimers that assemble into a ring structure.

The protein resides in the cytoplasm. It carries out the reaction a hydroperoxide + [thioredoxin]-dithiol = an alcohol + [thioredoxin]-disulfide + H2O. Thiol-specific peroxidase that catalyzes the reduction of hydrogen peroxide and organic hydroperoxides to water and alcohols, respectively. Plays a role in cell protection against oxidative stress by detoxifying peroxides. This is Peroxiredoxin from Ignicoccus hospitalis (strain KIN4/I / DSM 18386 / JCM 14125).